Here is a 294-residue protein sequence, read N- to C-terminus: Peroxidase-like protein 3 (294 aa).

Asn129 is a glycosylation site (N-linked (GlcNAc...) asparagine).

It belongs to the peroxidase family. As to expression, component of the acid-insoluble and acid-soluble organic matrix of calcified layers of the shell (at protein level).

The protein localises to the secreted. This chain is Peroxidase-like protein 3, found in Lottia gigantea (Giant owl limpet).